A 422-amino-acid polypeptide reads, in one-letter code: Probable sucrose-phosphatase 2 (422 aa).

The protein belongs to the sucrose phosphatase family. In terms of assembly, homodimer. Mg(2+) serves as cofactor.

It catalyses the reaction sucrose 6(F)-phosphate + H2O = sucrose + phosphate. It participates in glycan biosynthesis; sucrose biosynthesis; sucrose from D-fructose 6-phosphate and UDP-alpha-D-glucose: step 2/2. Catalyzes the final step of sucrose synthesis. The sequence is that of Probable sucrose-phosphatase 2 (SPP2) from Arabidopsis thaliana (Mouse-ear cress).